The primary structure comprises 398 residues: Carbamoyl phosphate synthase small chain (398 aa).

A CPSase region spans residues 1-199 (MTPAWATEKP…WNEGFGEQAE (199 aa)). Positions 54, 251, and 253 each coordinate L-glutamine. Residues 203 to 391 (HVVAIDYGVK…VNLIREKRGE (189 aa)) enclose the Glutamine amidotransferase type-1 domain. Cys280 acts as the Nucleophile in catalysis. 5 residues coordinate L-glutamine: Leu281, Gln284, Asn322, Gly324, and Phe325. Catalysis depends on residues His364 and Glu366.

It belongs to the CarA family. Composed of two chains; the small (or glutamine) chain promotes the hydrolysis of glutamine to ammonia, which is used by the large (or ammonia) chain to synthesize carbamoyl phosphate. Tetramer of heterodimers (alpha,beta)4.

It catalyses the reaction hydrogencarbonate + L-glutamine + 2 ATP + H2O = carbamoyl phosphate + L-glutamate + 2 ADP + phosphate + 2 H(+). It carries out the reaction L-glutamine + H2O = L-glutamate + NH4(+). The protein operates within amino-acid biosynthesis; L-arginine biosynthesis; carbamoyl phosphate from bicarbonate: step 1/1. It participates in pyrimidine metabolism; UMP biosynthesis via de novo pathway; (S)-dihydroorotate from bicarbonate: step 1/3. Small subunit of the glutamine-dependent carbamoyl phosphate synthetase (CPSase). CPSase catalyzes the formation of carbamoyl phosphate from the ammonia moiety of glutamine, carbonate, and phosphate donated by ATP, constituting the first step of 2 biosynthetic pathways, one leading to arginine and/or urea and the other to pyrimidine nucleotides. The small subunit (glutamine amidotransferase) binds and cleaves glutamine to supply the large subunit with the substrate ammonia. This is Carbamoyl phosphate synthase small chain from Mesorhizobium japonicum (strain LMG 29417 / CECT 9101 / MAFF 303099) (Mesorhizobium loti (strain MAFF 303099)).